Consider the following 638-residue polypeptide: ABC transporter G family member 12 (638 aa).

The segment at 42–61 (KQEKAKKKNDTESSTGDMNT) is disordered. The ABC transporter domain occupies 58 to 301 (DMNTGVSTTI…SLGYPCPNNT (244 aa)). Residue 91–98 (GPSGSGKS) participates in ATP binding. The 260-residue stretch at 374 to 633 (GNFVARVGTA…WTSYLALHFL (260 aa)) folds into the ABC transmembrane type-2 domain. 7 consecutive transmembrane segments (helical) span residues 376 to 396 (FVAR…CFAG), 410 to 430 (TIFF…SLFL), 459 to 479 (TLIV…FAHL), 484 to 504 (GHFF…DFMI), 516 to 536 (MTFA…GFYV), 544 to 564 (SFGW…LVVN), and 612 to 632 (FGVV…ALHF).

This sequence belongs to the ABC transporter superfamily. ABCG family. Eye pigment precursor importer (TC 3.A.1.204) subfamily.

The protein localises to the membrane. In Dictyostelium discoideum (Social amoeba), this protein is ABC transporter G family member 12 (abcG12).